A 259-amino-acid chain; its full sequence is Tryptophan synthase alpha chain (259 aa).

Residues Glu52 and Asp63 each act as proton acceptor in the active site.

This sequence belongs to the TrpA family. As to quaternary structure, tetramer of two alpha and two beta chains.

It catalyses the reaction (1S,2R)-1-C-(indol-3-yl)glycerol 3-phosphate + L-serine = D-glyceraldehyde 3-phosphate + L-tryptophan + H2O. It participates in amino-acid biosynthesis; L-tryptophan biosynthesis; L-tryptophan from chorismate: step 5/5. Its function is as follows. The alpha subunit is responsible for the aldol cleavage of indoleglycerol phosphate to indole and glyceraldehyde 3-phosphate. The protein is Tryptophan synthase alpha chain of Streptococcus sanguinis (strain SK36).